The following is a 348-amino-acid chain: Protein pelota homolog (348 aa).

The protein belongs to the eukaryotic release factor 1 family. Pelota subfamily. Monomer. It depends on a divalent metal cation as a cofactor.

It localises to the cytoplasm. May function in recognizing stalled ribosomes, interact with stem-loop structures in stalled mRNA molecules, and effect endonucleolytic cleavage of the mRNA. May play a role in the release non-functional ribosomes and degradation of damaged mRNAs. Has endoribonuclease activity. The chain is Protein pelota homolog from Methanococcus maripaludis (strain DSM 14266 / JCM 13030 / NBRC 101832 / S2 / LL).